A 160-amino-acid polypeptide reads, in one-letter code: MKQKYSKKSKKWIYITTIIFILILDISSKRLIIKYIKTYDTKKIFSVLNFFHVHNHGAAFSFLSDQNGWQKWFLSTVSMLTILVMTRIITKLKKQETKKITAYSLIIAGATGNLIDRIFYGFVVDFIDIHINDWHFATFNIADCSIFIGIIILMRINYST.

The next 3 membrane-spanning stretches (helical) occupy residues 13 to 33 (IYIT…RLII), 72 to 92 (WFLS…ITKL), and 104 to 124 (SLII…GFVV). Active-site residues include Asp125 and Asp143. Residues 134-154 (WHFATFNIADCSIFIGIIILM) traverse the membrane as a helical segment.

This sequence belongs to the peptidase A8 family.

The protein resides in the cell inner membrane. The enzyme catalyses Release of signal peptides from bacterial membrane prolipoproteins. Hydrolyzes -Xaa-Yaa-Zaa-|-(S,diacylglyceryl)Cys-, in which Xaa is hydrophobic (preferably Leu), and Yaa (Ala or Ser) and Zaa (Gly or Ala) have small, neutral side chains.. It participates in protein modification; lipoprotein biosynthesis (signal peptide cleavage). This protein specifically catalyzes the removal of signal peptides from prolipoproteins. The sequence is that of Lipoprotein signal peptidase from Buchnera aphidicola subsp. Acyrthosiphon pisum (strain 5A).